The sequence spans 589 residues: PTS system mannitol-specific EIICB component (589 aa).

Topologically, residues M1–N25 are cytoplasmic. The 334-residue stretch at L14 to S347 folds into the PTS EIIC type-2 domain. Residues I26–N47 traverse the membrane as a helical segment. Residues E48–A51 are Extracellular-facing. Residues T52–Y72 form a helical membrane-spanning segment. The Cytoplasmic portion of the chain corresponds to M73–F135. A helical membrane pass occupies residues S136–S157. Residues T158 to G166 lie on the Extracellular side of the membrane. The chain crosses the membrane as a helical span at residues V167–K187. The Cytoplasmic segment spans residues V188–A274. Residues A275 to K294 traverse the membrane as a helical segment. At S295 to H316 the chain is on the extracellular side. The chain crosses the membrane as a helical span at residues L317–L338. Residues H339–K589 are Cytoplasmic-facing. The PTS EIIB type-2 domain occupies E381–E476. Residue C387 is the Phosphocysteine intermediate; for EIIB activity of the active site. Position 387 is a phosphocysteine; by EIIA (C387).

Homodimer.

It is found in the cell membrane. The catalysed reaction is D-mannitol(out) + N(pros)-phospho-L-histidyl-[protein] = D-mannitol 1-phosphate(in) + L-histidyl-[protein]. The phosphoenolpyruvate-dependent sugar phosphotransferase system (sugar PTS), a major carbohydrate active transport system, catalyzes the phosphorylation of incoming sugar substrates concomitantly with their translocation across the cell membrane. The enzyme II CmtAB PTS system is involved in D-mannitol transport. This Streptococcus pneumoniae serotype 4 (strain ATCC BAA-334 / TIGR4) protein is PTS system mannitol-specific EIICB component (mtlA).